The sequence spans 291 residues: Protein US2 (291 aa).

G2 bears the N-acetylglycine; by host mark. The interval 223 to 281 (NKPRPASSRPHPATHPTQRPCFTCMGRPEIPDEPSWQTGDDDPQNPGPPLAVGDEWPPS) is disordered.

This sequence belongs to the herpesviridae HHV-1 US2 protein family. As to quaternary structure, interacts with host KRT18. Interacts with host MAP3K7; this interaction induces host NF-kappa-B pathway.

The protein localises to the virion. The protein resides in the host cytoplasm. It localises to the host cell surface. Its subcellular location is the host nucleus. Functionally, plays a role in the activation of the host NF-kappa-B pathway by interacting with and thus activating the component MAP3K7. This Human herpesvirus 2 (strain HG52) (HHV-2) protein is Protein US2.